Consider the following 247-residue polypeptide: ATP synthase delta chain, chloroplastic (247 aa).

A chloroplast-targeting transit peptide spans 1–60; it reads MAALRLASFTLRPAAAAAASASSGATPAAPRSASFARAARGLPSLRLAPPRRRGDLVRPR.

The protein belongs to the ATPase delta chain family. In terms of assembly, F-type ATPases have 2 components, CF(1) - the catalytic core - and CF(0) - the membrane proton channel. CF(1) has five subunits: alpha(3), beta(3), gamma(1), delta(1), epsilon(1). CF(0) has three main subunits: a, b and c.

The protein localises to the plastid. It localises to the chloroplast thylakoid membrane. Its function is as follows. This protein seems to be part of the stalk that links CF(0) to CF(1). It either transmits conformational changes from CF(0) into CF(1) or is implicated in proton conduction. In Sorghum bicolor (Sorghum), this protein is ATP synthase delta chain, chloroplastic (ATPD).